Reading from the N-terminus, the 92-residue chain is Large ribosomal subunit protein bL27 (92 aa).

Residues 1–20 (MAHKKAGGSTRNGRDSNPKY) form a disordered region.

Belongs to the bacterial ribosomal protein bL27 family.

In Legionella pneumophila (strain Paris), this protein is Large ribosomal subunit protein bL27.